A 31-amino-acid chain; its full sequence is Cytochrome b6-f complex subunit 6 (31 aa).

A helical transmembrane segment spans residues 3-23; sequence TLTSYFGFLLVALTITLVLFI.

Belongs to the PetL family. As to quaternary structure, the 4 large subunits of the cytochrome b6-f complex are cytochrome b6, subunit IV (17 kDa polypeptide, PetD), cytochrome f and the Rieske protein, while the 4 small subunits are PetG, PetL, PetM and PetN. The complex functions as a dimer.

The protein resides in the plastid. It is found in the chloroplast thylakoid membrane. Its function is as follows. Component of the cytochrome b6-f complex, which mediates electron transfer between photosystem II (PSII) and photosystem I (PSI), cyclic electron flow around PSI, and state transitions. PetL is important for photoautotrophic growth as well as for electron transfer efficiency and stability of the cytochrome b6-f complex. In Populus alba (White poplar), this protein is Cytochrome b6-f complex subunit 6.